A 131-amino-acid polypeptide reads, in one-letter code: D-ribose pyranase (131 aa).

The active-site Proton donor is histidine 20. Substrate contacts are provided by residues aspartate 28, histidine 98, and 120–122 (YSN).

Belongs to the RbsD / FucU family. RbsD subfamily. As to quaternary structure, homodecamer.

It localises to the cytoplasm. The catalysed reaction is beta-D-ribopyranose = beta-D-ribofuranose. The protein operates within carbohydrate metabolism; D-ribose degradation; D-ribose 5-phosphate from beta-D-ribopyranose: step 1/2. Its function is as follows. Catalyzes the interconversion of beta-pyran and beta-furan forms of D-ribose. The chain is D-ribose pyranase from Latilactobacillus sakei subsp. sakei (strain 23K) (Lactobacillus sakei subsp. sakei).